Consider the following 385-residue polypeptide: Putative 8-amino-7-oxononanoate synthase (385 aa).

Arginine 21 is a binding site for substrate. 108 to 109 serves as a coordination point for pyridoxal 5'-phosphate; the sequence is GY. Histidine 133 provides a ligand contact to substrate. Pyridoxal 5'-phosphate is bound by residues serine 182, 207-210, and 234-237; these read DEAH and TFGK. Position 237 is an N6-(pyridoxal phosphate)lysine (lysine 237). Substrate is bound at residue serine 351.

The protein belongs to the class-II pyridoxal-phosphate-dependent aminotransferase family. BioF subfamily. In terms of assembly, homodimer. Requires pyridoxal 5'-phosphate as cofactor.

The enzyme catalyses 6-carboxyhexanoyl-[ACP] + L-alanine + H(+) = (8S)-8-amino-7-oxononanoate + holo-[ACP] + CO2. The protein operates within cofactor biosynthesis; biotin biosynthesis. In terms of biological role, catalyzes the decarboxylative condensation of pimeloyl-[acyl-carrier protein] and L-alanine to produce 8-amino-7-oxononanoate (AON), [acyl-carrier protein], and carbon dioxide. This Desulfosudis oleivorans (strain DSM 6200 / JCM 39069 / Hxd3) (Desulfococcus oleovorans) protein is Putative 8-amino-7-oxononanoate synthase (bioF).